The following is a 597-amino-acid chain: Elongation factor 4 (597 aa).

The region spanning 2–184 is the tr-type G domain; sequence QHIRNFSIIA…AIVARVPSPE (183 aa). GTP is bound by residues 14 to 19 and 131 to 134; these read DHGKST and NKMD.

The protein belongs to the TRAFAC class translation factor GTPase superfamily. Classic translation factor GTPase family. LepA subfamily.

It is found in the cell inner membrane. The enzyme catalyses GTP + H2O = GDP + phosphate + H(+). Its function is as follows. Required for accurate and efficient protein synthesis under certain stress conditions. May act as a fidelity factor of the translation reaction, by catalyzing a one-codon backward translocation of tRNAs on improperly translocated ribosomes. Back-translocation proceeds from a post-translocation (POST) complex to a pre-translocation (PRE) complex, thus giving elongation factor G a second chance to translocate the tRNAs correctly. Binds to ribosomes in a GTP-dependent manner. This Bordetella avium (strain 197N) protein is Elongation factor 4.